The primary structure comprises 186 residues: MKKILNLFVISAFLSISSAAFAQNVKPAATKPSVATLPNGASSLTETYGLWSVNCGIQDGNKICIMLRQEVNEQDRVLLSMSVSLDGEGTVSGNLTIPFGILVSKPIRLHVDDSKSVIESNVRTCVPAGCVVPIVFDKNFVGSLRAGKQLKLSMTVAAPGEPTLDNLFVQLDGFSNALKRLTSLQK.

Residues 1-22 (MKKILNLFVISAFLSISSAAFA) form the signal peptide.

Belongs to the IalB family.

Its function is as follows. Required with NudH/IalA for erythrocytes invasion. This is Invasion protein B (ialB) from Bartonella bacilliformis (strain ATCC 35685 / KC583 / Herrer 020/F12,63).